A 72-amino-acid polypeptide reads, in one-letter code: MSDKPDSQVFCPNCNERLQKCLVQQNYAIIICPSLVCGYPFNQREVLENLTYVDDNDVLKVAKKRLSSRSKP.

It localises to the cytoplasm. The protein resides in the nucleus. This is an uncharacterized protein from Saccharomyces cerevisiae (strain ATCC 204508 / S288c) (Baker's yeast).